The chain runs to 334 residues: MFRRERSIPLRSSAAALSNNLSVLQLPARDLTHFGVVHGPSAQLLSAAPEGVPLAQRQLHVKEGAGVSPPLITQVHWCVLPFRVLLVLTSHRGIQMYESDGSVMVYWHALDSGDASSVQAMFARGIAASVHFICVGTCSGRVLVFDIPAKGPNIVLSEELAGHQTPITDIATERAQGQDGVADMVTADDSGVLCVWRSGPEFTLLTRIPGFGVPCPSVQLWQGIVAAGYGNGQVRLYDASTGALHVQISAHARTISALDLAPEVGKLLSAAEDTFVHIWKLNRNPESGSIEVEHCHGECISDTQVCGARFCDPLGSSFAVTGYDLAEILRFGTV.

3 WD repeats span residues 116 to 155, 162 to 206, and 250 to 289; these read SSVQ…PNIV, GHQT…TLLT, and AHAR…ESGS.

Homodimer and homotrimer; forms tight forms of dimers and trimers. Interacts with IZUMO1 and IZUMO1R/JUNO. In terms of processing, cross-linked to tightly form both dimers and trimers by TGM2. Cross-linking enhances the activation of EGF receptor-mediated signaling pathway. Cross-linking is inhibited by EGF. Post-translationally, ubiquitinated. EGF increases ubiquitination.

The protein resides in the vesicle. It localises to the cytoplasm. Its subcellular location is the cell membrane. Functionally, plays a role in the adhesion and fusion of the sperm-oocyte membrane through its interactions with IZUMO1 and IZUMO1R/JUNO. When cross-linked to form dimers and trimers, it has a regulatory effect on ERK signaling pathway activity in response to EGF stimulation. Colocalizes with the EGF receptor in WDR54-specific vesicle where it sustains the internalization and controls the degradation of the EGF receptor after EGF stimulation. The polypeptide is WD repeat-containing protein 54 (Mus musculus (Mouse)).